A 441-amino-acid polypeptide reads, in one-letter code: MKGLYIKSYGCQMNVYDSLIMENIIKPLGFTVVSEPSEADVVILNTCHIREKASEKLYSELGKIRKIQENKDLTIVVAGCVAQAEGEEIFERSPFVDIVVGPQSIHTLPELLVKAHRIKKQVINIDFPVISKFDAIPVEEYTKNQETSAFISVQEGCNKFCTFCVVPYTRGEEYSRTVEAIFNEALVLADSGIKEITLIGQNVNAYHGTYKGCEWDLGKLIQHIAKIPNIERIRYTTSHPRDMHQSLYEAHKLEEKLMPFVHLPVQSGSDRILKKMNRKHTAEEYIDIISHLRKQRPDIAFSSDFIVGFPGETEEDFENTIKLVEKVKFSQAYSFKYSPRPGTPGAEYPNQVPEEIKSERLLRLQKLLREQQLAFNRSMIGETCTVLFSSKKGKFDNQIIGKTAYMQSCYINTDNPSQFYNSISPIKIIDAHQNSLTGVVC.

The MTTase N-terminal domain maps to lysine 2–arginine 117. 6 residues coordinate [4Fe-4S] cluster: cysteine 11, cysteine 47, cysteine 80, cysteine 157, cysteine 161, and cysteine 164. The 232-residue stretch at lysine 143 to alanine 374 folds into the Radical SAM core domain.

Belongs to the methylthiotransferase family. MiaB subfamily. As to quaternary structure, monomer. Requires [4Fe-4S] cluster as cofactor.

It localises to the cytoplasm. It carries out the reaction N(6)-dimethylallyladenosine(37) in tRNA + (sulfur carrier)-SH + AH2 + 2 S-adenosyl-L-methionine = 2-methylsulfanyl-N(6)-dimethylallyladenosine(37) in tRNA + (sulfur carrier)-H + 5'-deoxyadenosine + L-methionine + A + S-adenosyl-L-homocysteine + 2 H(+). In terms of biological role, catalyzes the methylthiolation of N6-(dimethylallyl)adenosine (i(6)A), leading to the formation of 2-methylthio-N6-(dimethylallyl)adenosine (ms(2)i(6)A) at position 37 in tRNAs that read codons beginning with uridine. The polypeptide is tRNA-2-methylthio-N(6)-dimethylallyladenosine synthase (Ehrlichia canis (strain Jake)).